We begin with the raw amino-acid sequence, 291 residues long: Phytanoyl-CoA dioxygenase domain-containing protein 1 (291 aa).

Threonine 55 carries the post-translational modification Phosphothreonine. Residues lysine 102, methionine 141, 156–158, and tryptophan 174 contribute to the 2-oxoglutarate site; that span reads HQD. Residues histidine 156 and aspartate 158 each contribute to the Fe cation site. A Fe cation-binding site is contributed by histidine 246. The 2-oxoglutarate site is built by serine 248 and arginine 257.

The protein belongs to the PhyH family. PHYHD1 subfamily. The cofactor is Fe cation.

Activity is increased by ascorbate. Inhibited by myristoyl-CoA. Its function is as follows. 2-oxoglutarate(2OG)-dependent dioxygenase that catalyzes the conversion of 2-oxoglutarate to succinate and CO(2) in an iron-dependent manner. However, does not couple 2OG turnover to the hydroxylation of acyl-coenzyme A derivatives, implying that it is not directly involved in phytanoyl coenzyme-A metabolism. Does not show detectable activity towards fatty acid CoA thioesters. In terms of biological role, isoform 2 probably lacks enzyme activity. Isoform 3 probably lacks enzyme activity. This Homo sapiens (Human) protein is Phytanoyl-CoA dioxygenase domain-containing protein 1.